The chain runs to 464 residues: Na(+)/H(+) antiporter NhaA 2 (464 aa).

The next 11 helical transmembrane spans lie at 53–73, 96–116, 134–154, 165–185, 195–215, 219–239, 257–277, 313–333, 340–360, 378–398, and 412–432; these read VGGIILLVAAAAALIWANSPW, LTLGAWAADGLLAIFFLVVGL, ALPIAAAVGGMVVPALIFVLV, GWAIPTATDIAFAVAVLAVIS, FLLTLAVVDDLLAITVIAVFY, IKAWALALAVVPLALFTVCAQ, VLVHESGVHATVAGVLLGFAV, IAIPVFAFFAAGVSIGGLSGL, PITLGIVLGLVAGKPIGILVT, WVDVLGMSMLAGIGFTVSLLI, and FVKIGVLSGSLLAASLAAIVL.

The protein belongs to the NhaA Na(+)/H(+) (TC 2.A.33) antiporter family.

The protein resides in the cell membrane. It carries out the reaction Na(+)(in) + 2 H(+)(out) = Na(+)(out) + 2 H(+)(in). Functionally, na(+)/H(+) antiporter that extrudes sodium in exchange for external protons. The sequence is that of Na(+)/H(+) antiporter NhaA 2 from Mycolicibacterium vanbaalenii (strain DSM 7251 / JCM 13017 / BCRC 16820 / KCTC 9966 / NRRL B-24157 / PYR-1) (Mycobacterium vanbaalenii).